The sequence spans 92 residues: UPF0250 protein VV0902 (92 aa).

The protein belongs to the UPF0250 family.

The sequence is that of UPF0250 protein VV0902 from Vibrio vulnificus (strain YJ016).